We begin with the raw amino-acid sequence, 679 residues long: WD repeat-containing protein 48 homolog (679 aa).

WD repeat units follow at residues 26 to 65 (QHRN…NEKY), 71 to 110 (HHND…CMST), 113 to 152 (THRD…ALTA), 164 to 203 (GSKD…RSMK), 206 to 245 (GHTE…CIQT), 248 to 287 (VHKE…NKML), 290 to 329 (EEKA…RCVL), and 349 to 388 (KGGA…KKEE). Residues 594 to 615 (PSAGNANNSLQNSQSDANSEGS) form a disordered region.

This sequence belongs to the WD repeat WDR48 family. As to quaternary structure, catalytic component of the Usp12-46 deubiquitylase complex consisting of Usp12-46, Wdr20 and Uaf1; regulatory subunit that, together wtih Wdr20, stabilizes Usp12-46. The Usp12-46 deubiquitylase complex associates with arr/arrow; the interaction leads to deubiquitination and stabilization of arr/arrow.

Its function is as follows. Regulatory component of the Usp12-46 deubiquitylase complex. activates deubiquitination by increasing the catalytic turnover without increasing the affinity of deubiquitinating enzymes for the substrate. The complex deubiquitylates the wg/wingless-signaling receptor arr/arrow, which stabilizes the receptor and increases its concentration at the cell surface; this enhances the sensitivity of cells to wg/wingless-signal stimulation. This increases the amplitude and spatial range of the signaling response to the wg/wingless morphogen gradient, facilitating the precise concentration-dependent regulation of its target genes. Together with Wdr20 and Usp12-46 required for wg/wingless-mediated signaling in the wing imaginal disc and for wg/wingless-dependent regulation of intestinal stem cell proliferation. This is WD repeat-containing protein 48 homolog from Drosophila mojavensis (Fruit fly).